A 107-amino-acid polypeptide reads, in one-letter code: Quaternary ammonium compound-resistance protein QacG (107 aa).

Transmembrane regions (helical) follow at residues 1-21 (MHYL…SFLK), 26-46 (FTKL…FYFL), 57-77 (ITYA…SVIV), and 84-104 (LISI…NVFG).

The protein belongs to the drug/metabolite transporter (DMT) superfamily. Small multidrug resistance (SMR) (TC 2.A.7.1) family.

The protein resides in the cell membrane. Multidrug exporter. Is implicated for the resistance to bacteriocidal quaternary ammonium compounds. In Staphylococcus sp. (strain ST94), this protein is Quaternary ammonium compound-resistance protein QacG (qacG).